The chain runs to 273 residues: MAIVKCKPTSAGRRHVVKIVNPELHKGKPYAPLLGIKSKTGGRNNLGRITTRHIGGGHKQHYRVIDFKRNKLDIPAVVERLEYDPNRSANIALVLYKDGERRYILAPKGLSAGDQIQSGINAPIKIGNSLPMRNIPVGSTVHNVELKPGKGGQIARSAGAYVQIIAREGNYVTLRLRSGEMRKVLSECVATIGEVGNSEHMLRVLGKAGANRWRGVRPTVRGTAMNPVDHPHGGGEGRNFGKHPVTPWGVQTKGKKTRHNKRTDKYIVRRRGK.

The interval 221 to 263 (RGTAMNPVDHPHGGGEGRNFGKHPVTPWGVQTKGKKTRHNKRT) is disordered. Residues 253 to 263 (KGKKTRHNKRT) show a composition bias toward basic residues.

The protein belongs to the universal ribosomal protein uL2 family. In terms of assembly, part of the 50S ribosomal subunit. Forms a bridge to the 30S subunit in the 70S ribosome.

In terms of biological role, one of the primary rRNA binding proteins. Required for association of the 30S and 50S subunits to form the 70S ribosome, for tRNA binding and peptide bond formation. It has been suggested to have peptidyltransferase activity; this is somewhat controversial. Makes several contacts with the 16S rRNA in the 70S ribosome. This chain is Large ribosomal subunit protein uL2, found in Histophilus somni (strain 129Pt) (Haemophilus somnus).